A 494-amino-acid chain; its full sequence is MNLLDPFMKMTEEQDKCISDAPSPTMSDDSAGSPCPSGSGSDTENTRPQENTFPKGDPDLKKESDEDKFPVCIREAVSQVLKGYDWTLVPMPVRVNGSSKNKPHVKRPMNAFMVWAQAARRKLADQYPHLHNAELSKTLGKLWRLLNESEKRPFVEEAERLRVQHKKDHPDYKYQPRRRKSVKNGQSEQEEGSEQTHISPNAIFKALQADSPQSSSSISEVHSPGEHSGQSQGPPTPPTTPKTDAQQPGKQDLKREGRPLAEGGRQPPHIDFRDVDIGELSSDVISNIETFDVNEFDQYLPPNGHPGVPATHGQVTTYSGTYGISSSASSPAGAGHAWMAKQQPQPPQPPAQPPAQHTLPALSGEQGPAQQRPHIKTEQLSPSHYSEQQQHSPQQQQQQQQQLGYGSFNLQHYGSSYPPITRSQYDYTEHQNSGSYYSHAAGQSGGLYSTFTYMNPTQRPMYTPIADTSGVPSIPQTHSPQHWEQPVYTQLTRP.

Disordered stretches follow at residues 1 to 66 (MNLL…ESDE) and 159 to 275 (ERLR…FRDV). Residues 27 to 42 (SDDSAGSPCPSGSGSD) are compositionally biased toward low complexity. Composition is skewed to basic and acidic residues over residues 56 to 66 (GDPDLKKESDE) and 159 to 174 (ERLRVQHKKDHPDYKY). The segment at 63 to 103 (ESDEDKFPVCIREAVSQVLKGYDWTLVPMPVRVNGSSKNKP) is dimerization (DIM). A PQA region spans residues 63–103 (ESDEDKFPVCIREAVSQVLKGYDWTLVPMPVRVNGSSKNKP). At Ser64 the chain carries Phosphoserine. Positions 105-173 (VKRPMNAFMV…QHKKDHPDYK (69 aa)) form a DNA-binding region, HMG box. A Phosphoserine modification is found at Ser181. The span at 211 to 222 (SPQSSSSISEVH) shows a compositional bias: low complexity. Positions 224–309 (PGEHSGQSQG…LPPNGHPGVP (86 aa)) are transactivation domain (TAM). 2 consecutive short sequence motifs (9aaTAD) follow at residues 277–286 (IGELSSDVIS) and 292–300 (DVNEFDQYL). Residues 326–337 (SSASSPAGAGHA) are compositionally biased toward low complexity. The segment at 326–402 (SSASSPAGAG…PQQQQQQQQQ (77 aa)) is disordered. A compositionally biased stretch (pro residues) spans 344 to 353 (PQPPQPPAQP). Positions 372–494 (RPHIKTEQLS…QPVYTQLTRP (123 aa)) are transactivation domain (TAC). Residue Lys376 forms a Glycyl lysine isopeptide (Lys-Gly) (interchain with G-Cter in SUMO) linkage. Residues 378 to 387 (EQLSPSHYSE) are compositionally biased toward polar residues. The span at 388–402 (QQQHSPQQQQQQQQQ) shows a compositional bias: low complexity. A 9aaTAD 3 motif is present at residues 445–453 (GGLYSTFTY). A disordered region spans residues 462–494 (YTPIADTSGVPSIPQTHSPQHWEQPVYTQLTRP). Residues 470–494 (GVPSIPQTHSPQHWEQPVYTQLTRP) are compositionally biased toward polar residues.

As to quaternary structure, interacts with SNAI2; triggers neural crest delamination in a phosphorylation dependent manner. Interacts with UBE2I. In terms of processing, phosphorylated at Ser-181 in the developing neural tube. Phosphorylation at either Ser-64 or Ser-181 is required for sumoylation, but phosphorylation is not dependent on sumoylation. Sumoylation is enhanced by PKA. Phosphorylation is required for interaction with SNAI2 to trigger neural crest delamination and for an efficient trunk neural crest delamination, whereas sumoylation plays a less significant role. Phosphorylation and sumoylation are induced by BMP signaling pathway. Post-translationally, sumoylated at Lys-376; phosphorylation at either Ser-64 or Ser-181 is required for sumoylation. Sumoylation is induced by BMP signaling pathway.

It is found in the nucleus. Functionally, transcription factor that plays a key role in chondrocytes differentiation and skeletal development. Specifically binds the 5'-ACAAAG-3' DNA motif present in enhancers and super-enhancers and promotes expression of genes important for chondrogenesis, including COL2A1. Plays a central role in successive steps of chondrocyte differentiation. Absolutely required for precartilaginous condensation, the first step in chondrogenesis during which skeletal progenitors differentiate into prechondrocytes. Together with SOX5 and SOX6, required for overt chondrogenesis when condensed prechondrocytes differentiate into early stage chondrocytes, the second step in chondrogenesis. Later, required to direct hypertrophic maturation and block osteoblast differentiation of growth plate chondrocytes: maintains chondrocyte columnar proliferation, delays prehypertrophy and then prevents osteoblastic differentiation of chondrocytes. Also required for chondrocyte hypertrophy, both indirectly, by keeping the lineage fate of chondrocytes, and directly, by remaining present in upper hypertrophic cells. Low lipid levels are the main nutritional determinant for chondrogenic commitment of skeletal progenitor cells: when lipids levels are low, FOXO transcription factors promote expression of SOX9, which induces chondrogenic commitment and suppresses fatty acid oxidation. In addition to cartilage development, also acts as a regulator of proliferation and differentiation in epithelial stem/progenitor cells. In response to bone morphogenetic protein stimulus, phosphorylation is induced and then sumoylation, allowing cooperation with SNAI2 to trigger neural crest delamination. The polypeptide is Transcription factor SOX-9 (Gallus gallus (Chicken)).